We begin with the raw amino-acid sequence, 1072 residues long: Integrator complex subunit 3 homolog (1072 aa).

Disordered stretches follow at residues 920-943 (YPSSSPNKRKRPPKGISVSTSTPS) and 1002-1072 (DTTV…NDSD). Phosphoserine occurs at positions 1042, 1043, 1047, and 1048.

This sequence belongs to the Integrator subunit 3 family. As to quaternary structure, belongs to the multiprotein complex Integrator, at least composed of IntS1, IntS2, IntS3, IntS4, omd/IntS5, IntS6, defl/IntS7, IntS8, IntS9, IntS10, IntS11, IntS12, asun/IntS13, IntS14 and IntS15. The core complex associates with protein phosphatase 2A subunits mts/PP2A and Pp2A-29B, to form the Integrator-PP2A (INTAC) complex.

Its subcellular location is the nucleus. The protein localises to the cytoplasm. Its function is as follows. Component of the integrator complex, a multiprotein complex that terminates RNA polymerase II (Pol II) transcription in the promoter-proximal region of genes. The integrator complex provides a quality checkpoint during transcription elongation by driving premature transcription termination of transcripts that are unfavorably configured for transcriptional elongation: the complex terminates transcription by (1) catalyzing dephosphorylation of the C-terminal domain (CTD) of Pol II subunit Polr2A/Rbp1 and Spt5, and (2) degrading the exiting nascent RNA transcript via endonuclease activity. The integrator complex is also involved in the 3'-end processing of the U7 snRNA, and also the spliceosomal snRNAs U1, U2, U4 and U5. This is Integrator complex subunit 3 homolog (IntS3) from Drosophila yakuba (Fruit fly).